We begin with the raw amino-acid sequence, 511 residues long: cAMP-regulated M3L protein (511 aa).

The protein to D.discoideum protein M3R.

This Dictyostelium discoideum (Social amoeba) protein is cAMP-regulated M3L protein (prtA).